The sequence spans 1145 residues: DNA polymerase subunit gamma-1, mitochondrial (1145 aa).

A mitochondrion-targeting transit peptide spans 1-9; sequence MQFHLIRKY.

Belongs to the DNA polymerase type-A family. In terms of assembly, component of the DNA polymerase gamma complex consisting of two subunits: the catalytic subunit DNApol-gamma/DNApolG1 and the accessory subunit PolG2/DNApol-gamma35. Requires Mg(2+) as cofactor.

It is found in the mitochondrion. The catalysed reaction is DNA(n) + a 2'-deoxyribonucleoside 5'-triphosphate = DNA(n+1) + diphosphate. With respect to regulation, stimulated by KCl, and inhibited by the small molecules o 2',3'-dideoxythymidine 5'-triphosphate (d2TTP) and N-ethylmaleimide (NEM). Functionally, as the catalytic component of the DNA polymerase gamma complex is involved in the replication of mitochondrial DNA (mtDNA). Has both 5'-3' DNA polymerase and a highly mispair-specific 3'-5' exonuclease activity. At the end of mtDNA replication DNA ends are ligated to produce a closed circular mtDNA molecule, its exonuclease activity is required for formation of these ligatable ends by preventing DNA synthesis from continuing past the 5'-end of downstream DNA into duplex DNA regions. Does not possess DNA primase activity, does not catalyze strand displacement synthesis and does not contain a 5'-3' exonuclease activity to catalyze nick translation. Important for promoting the elimination of paternal mitochondrial DNA during spermatogenesis, however its exact role in this function has not yet been identified and appears to be independent of its 3'-5'-exonuclease activity and only partially dependent on its DNA polymerase activity. The protein is DNA polymerase subunit gamma-1, mitochondrial of Drosophila melanogaster (Fruit fly).